The sequence spans 364 residues: GTPase Obg (364 aa).

Residues 1–159 (MKFIDEARIE…RNLRLELKVL (159 aa)) enclose the Obg domain. Residues 128-147 (IHFKSSTNRAPRQKTDGKAG) are disordered. One can recognise an OBG-type G domain in the interval 160–334 (ADVGLLGMPN…LVHAIQEYLD (175 aa)). Residues 166 to 173 (GMPNAGKS), 191 to 195 (FTTLH), 213 to 216 (DIPG), 284 to 287 (NKLD), and 315 to 317 (SAL) contribute to the GTP site. The Mg(2+) site is built by Ser-173 and Thr-193. Positions 340–364 (EDAAAAAPDQRLDPTLHNVDHDDQA) are disordered. Over residues 349–364 (QRLDPTLHNVDHDDQA) the composition is skewed to basic and acidic residues.

The protein belongs to the TRAFAC class OBG-HflX-like GTPase superfamily. OBG GTPase family. Monomer. Requires Mg(2+) as cofactor.

The protein localises to the cytoplasm. Functionally, an essential GTPase which binds GTP, GDP and possibly (p)ppGpp with moderate affinity, with high nucleotide exchange rates and a fairly low GTP hydrolysis rate. Plays a role in control of the cell cycle, stress response, ribosome biogenesis and in those bacteria that undergo differentiation, in morphogenesis control. This Ralstonia pickettii (strain 12J) protein is GTPase Obg.